Here is a 427-residue protein sequence, read N- to C-terminus: Putative transporter YdfJ (427 aa).

The Cytoplasmic segment spans residues 1-7 (MDFQLYS). Helical transmembrane passes span 8 to 28 (LGAA…AMAL) and 29 to 49 (ILAM…AFIF). Topologically, residues 50-74 (GKMGDRIGRKKVLFITITMMGICTT) are cytoplasmic. A helical transmembrane segment spans residues 75 to 95 (LIGVLPTYAQIGVFAPILLVT). Residues 96-97 (LR) lie on the Periplasmic side of the membrane. Residues 98 to 118 (IIQGLGAGAEISGAGTMLAEY) form a helical membrane-spanning segment. The Cytoplasmic portion of the chain corresponds to 119 to 132 (APKGKRGIISSFVA). A helical membrane pass occupies residues 133-153 (MGTNCGTLSATAIWAFMFFIL). At 154–157 (SKEE) the chain is on the periplasmic side. The helical transmembrane segment at 158 to 178 (LLAWGWRIPFLASVVVMVFAI) threads the bilayer. Residues 179–225 (WLRMNLKESPVFEKVNDSNQPTAKPAPAGSMFQSKSFWLATGLRFGQ) are Cytoplasmic-facing. A helical transmembrane segment spans residues 226–246 (AGNSGLIQTFLAGYLVQTLLF). At 247–251 (NKAIP) the chain is on the periplasmic side. Residues 252 to 272 (TDALMISSILGFMTIPFLGWL) form a helical membrane-spanning segment. Residues 273 to 279 (SDKIGRR) lie on the Cytoplasmic side of the membrane. The helical transmembrane segment at 280–300 (IPYIIMNTSAIVLAWPMLSII) threads the bilayer. The Periplasmic segment spans residues 301–307 (VDKSYAP). A helical transmembrane segment spans residues 308–328 (STIMVALIVIHNCAVLGLFAL). The Cytoplasmic segment spans residues 329-351 (ENITMAEMFGCKNRFTRMAISKE). Residues 352–372 (IGGLIASGFGPILAGIFCTMT) form a helical membrane-spanning segment. A topological domain (periplasmic) is located at residue glutamate 373. A helical membrane pass occupies residues 374–394 (SWYPIAIMIMAYSVIGLISAL). Topologically, residues 395-427 (KMPEVKDRDLSALEDAAEDQPRVVRAAQPSRSL) are cytoplasmic.

Belongs to the major facilitator superfamily. Metabolite:H+ Symporter (MHS) family (TC 2.A.1.6) family.

The protein resides in the cell inner membrane. Functionally, when overexpressed in human HEK-293 cells forms an inward rectifying potassium channel. This is Putative transporter YdfJ (ydfJ) from Escherichia coli (strain K12).